The sequence spans 991 residues: Integrator complex subunit 8 (991 aa).

The span at 1–10 (MSAEAADREA) shows a compositional bias: basic and acidic residues. Residues 1–22 (MSAEAADREAATSSRPCTPPQT) form a disordered region. Polar residues predominate over residues 11–22 (ATSSRPCTPPQT). The WFEF motif signature appears at 24 to 29 (WFEFLL). 4 TPR repeats span residues 250-288 (CQGC…VSKI), 319-355 (SQPA…SLPD), 569-602 (VYIL…VTEF), and 829-862 (HSWL…CSDF).

This sequence belongs to the Integrator subunit 8 family. As to quaternary structure, component of the Integrator complex, composed of core subunits INTS1, INTS2, INTS3, INTS4, INTS5, INTS6, INTS7, INTS8, INTS9/RC74, INTS10, INTS11/CPSF3L, INTS12, INTS13, INTS14 and INTS15. The core complex associates with protein phosphatase 2A subunits PPP2CA and PPP2R1A, to form the Integrator-PP2A (INTAC) complex.

Its subcellular location is the nucleus. The protein resides in the chromosome. In terms of biological role, component of the integrator complex, a multiprotein complex that terminates RNA polymerase II (Pol II) transcription in the promoter-proximal region of genes. The integrator complex provides a quality checkpoint during transcription elongation by driving premature transcription termination of transcripts that are unfavorably configured for transcriptional elongation: the complex terminates transcription by (1) catalyzing dephosphorylation of the C-terminal domain (CTD) of Pol II subunit POLR2A/RPB1 and SUPT5H/SPT5, (2) degrading the exiting nascent RNA transcript via endonuclease activity and (3) promoting the release of Pol II from bound DNA. The integrator complex is also involved in terminating the synthesis of non-coding Pol II transcripts, such as enhancer RNAs (eRNAs), small nuclear RNAs (snRNAs), telomerase RNAs and long non-coding RNAs (lncRNAs). Within the integrator complex, INTS8 is required for the recruitment of protein phosphatase 2A (PP2A) to transcription pause-release checkpoint. This is Integrator complex subunit 8 (ints8) from Xenopus laevis (African clawed frog).